A 310-amino-acid polypeptide reads, in one-letter code: Acetyl-coenzyme A carboxylase carboxyl transferase subunit alpha (310 aa).

Positions 31–285 (SFERELRIIN…KQKILRRLKQ (255 aa)) constitute a CoA carboxyltransferase C-terminal domain.

Belongs to the AccA family. Acetyl-CoA carboxylase is a heterohexamer composed of biotin carboxyl carrier protein (accB), biotin carboxylase (accC) and two subunits each of ACCase subunit alpha (accA) and ACCase subunit beta (accD).

It is found in the plastid. It localises to the chloroplast. It catalyses the reaction N(6)-carboxybiotinyl-L-lysyl-[protein] + acetyl-CoA = N(6)-biotinyl-L-lysyl-[protein] + malonyl-CoA. It functions in the pathway lipid metabolism; malonyl-CoA biosynthesis; malonyl-CoA from acetyl-CoA: step 1/1. Its function is as follows. Component of the acetyl coenzyme A carboxylase (ACC) complex. First, biotin carboxylase catalyzes the carboxylation of biotin on its carrier protein (BCCP) and then the CO(2) group is transferred by the carboxyltransferase to acetyl-CoA to form malonyl-CoA. This chain is Acetyl-coenzyme A carboxylase carboxyl transferase subunit alpha, found in Cyanidioschyzon merolae (strain NIES-3377 / 10D) (Unicellular red alga).